A 276-amino-acid chain; its full sequence is Energy-coupling factor transporter ATP-binding protein EcfA1 (276 aa).

The ABC transporter domain maps to I2–D237. ATP is bound at residue G37–S44.

It belongs to the ABC transporter superfamily. Energy-coupling factor EcfA family. Forms a stable energy-coupling factor (ECF) transporter complex composed of 2 membrane-embedded substrate-binding proteins (S component), 2 ATP-binding proteins (A component) and 2 transmembrane proteins (T component).

The protein localises to the cell membrane. Functionally, ATP-binding (A) component of a common energy-coupling factor (ECF) ABC-transporter complex. Unlike classic ABC transporters this ECF transporter provides the energy necessary to transport a number of different substrates. The chain is Energy-coupling factor transporter ATP-binding protein EcfA1 from Streptococcus thermophilus (strain CNRZ 1066).